A 351-amino-acid chain; its full sequence is 5-deoxyribose 1-phosphate isomerase (351 aa).

Residues 48–50 (RGA), arginine 91, and glutamine 198 contribute to the substrate site. Catalysis depends on aspartate 239, which acts as the Proton donor. 249-250 (NK) is a substrate binding site.

Belongs to the EIF-2B alpha/beta/delta subunits family. DrdI subfamily.

The catalysed reaction is 5-deoxy-alpha-D-ribose 1-phosphate = 5-deoxy-D-ribulose 1-phosphate. The protein operates within carbohydrate degradation. In terms of biological role, catalyzes the isomerization of 5-deoxy-alpha-D-ribose 1-phosphate to 5-deoxy-D-ribulose 1-phosphate, as part of a 5-deoxyribose salvage pathway that recycles this toxic radical SAM enzyme by-product to mainstream metabolites. This Moorella thermoacetica (strain ATCC 39073 / JCM 9320) protein is 5-deoxyribose 1-phosphate isomerase.